A 344-amino-acid polypeptide reads, in one-letter code: Mitochondrial genome maintenance exonuclease 1 (344 aa).

Residues D238, D251, and K253 contribute to the active site. Position 343 is a phosphoserine (S343).

The protein belongs to the MGME1 family.

Its subcellular location is the mitochondrion. Functionally, metal-dependent single-stranded DNA (ssDNA) exonuclease involved in mitochondrial genome maintenance. Has preference for 5'-3' exonuclease activity but is also capable of endonuclease activity on linear substrates. Necessary for maintenance of proper 7S DNA levels. Probably involved in mitochondrial DNA (mtDNA) repair, possibly via the processing of displaced DNA containing Okazaki fragments during RNA-primed DNA synthesis on the lagging strand or via processing of DNA flaps during long-patch base excision repair. Specifically binds 5-hydroxymethylcytosine (5hmC)-containing DNA in stem cells. The polypeptide is Mitochondrial genome maintenance exonuclease 1 (Homo sapiens (Human)).